A 1230-amino-acid polypeptide reads, in one-letter code: Potassium channel subfamily T member 1 (1230 aa).

Residues 1–37 are disordered; sequence MARAKLPRSPSEGKAGPGGAPAGAAAPEEPHGLSPLL. Topologically, residues 1 to 93 are cytoplasmic; the sequence is MARAKLPRSP…LFFIKNQRSS (93 aa). The helical transmembrane segment at 94–126 threads the bilayer; the sequence is LRIRLFNFSLKLLTCLLYIVRVLLDDPALGIGC. Residues 127-153 lie on the Extracellular side of the membrane; the sequence is WGCPKQNYSFNDSSSEINWAPILWVER. Asn133 and Asn137 each carry an N-linked (GlcNAc...) asparagine glycan. Residues 154 to 178 form a helical membrane-spanning segment; sequence KMTLWAIQVIVAIISFLETMLLIYL. Residues 179-192 are Cytoplasmic-facing; that stretch reads SYKGNIWEQIFRVS. A helical membrane pass occupies residues 193–208; sequence FVLEMINTLPFIITIF. At 209–215 the chain is on the extracellular side; that stretch reads WPPLRNL. A helical membrane pass occupies residues 216–233; that stretch reads FIPVFLNCWLAKHALENM. The Cytoplasmic segment spans residues 234–246; that stretch reads INDFHRAILRTQS. A helical transmembrane segment spans residues 247-274; the sequence is AMFNQVLILFCTLLCLVFTGTCGIQHLE. Residues 275 to 281 are Extracellular-facing; the sequence is RAGENLS. The pore-forming intramembrane region spans 282–302; sequence LLTSFYFCIVTFSTVGYGDVT. Val296 and Gly297 together coordinate K(+). Over 303–304 the chain is Extracellular; the sequence is PK. The helical transmembrane segment at 305–338 threads the bilayer; the sequence is IWPSQLLVVIMICVALVVLPLQFEELVYLWMERQ. At 339 to 1230 the chain is on the cytoplasmic side; the sequence is KSGGNYSRHR…NPETRDETQL (892 aa). An RCK N-terminal 1 domain is found at 352-488; sequence EKHVVLCVSS…FHVKFADHVV (137 aa). Na(+) is bound by residues Leu513, His516, Ser538, and Asn540. Positions 660-689 are disordered; the sequence is TEHRPTQSGGGGGGSKLALPTENGSGSRRP. Residues Cys758 and Cys759 each contribute to the Zn(2+) site. The K(+) site is built by Arg761 and Lys764. Arg761 and Lys764 together coordinate Na(+). Residues Cys766 and His768 each contribute to the Zn(2+) site. K(+)-binding residues include Asn769, Tyr771, Tyr777, and Gly778. A Na(+)-binding site is contributed by Tyr771. Phe779 is a binding site for Na(+). The RCK N-terminal 2 domain occupies 781-921; that stretch reads NKLIIVSAET…QFRAKDSYSL (141 aa). The K(+) site is built by Ser787, Leu818, Asp820, Gly842, and Asp865. Disordered stretches follow at residues 1048-1078 and 1204-1230; these read EVKGPWGSRAGTGGSSQGRHTGGGDPAEHPL and SSSQSRKSSCSHKLSSCNPETRDETQL. Residues 1057–1072 are compositionally biased toward gly residues; sequence AGTGGSSQGRHTGGGD. Residues 1204 to 1219 are compositionally biased toward low complexity; the sequence is SSSQSRKSSCSHKLSS.

Belongs to the potassium channel family. Calcium-activated (TC 1.A.1.3) subfamily. KCa4.1/KCNT1 sub-subfamily. Homotetramer; which constitutes the Na(+)-activated K(+) channel. Interacts with KCNT2; these heterodimer channels differ from the homomers in their unitary conductance, kinetic behavior, subcellular localization, and response to activation of protein kinase C. Interacts (via C-terminus) with FMR1; this interaction alters gating properties of KCNT1. Interacts with CRBN via its cytoplasmic C-terminus. Post-translationally, phosphorylated by protein kinase C. Phosphorylation of the C-terminal domain increases channel activity. As to expression, highest expression in liver, brain and spinal cord. Lowest expression in skeletal muscle.

It is found in the cell membrane. The catalysed reaction is K(+)(in) = K(+)(out). Activated by high intracellular Na(+). In addition to activation by Na(+), is cooperatively activated by intracellular Cl(-) levels. Inhibited by Zn(2+). Activated upon stimulation of G-protein coupled receptors, such as CHRM1 and GRIA1. Its function is as follows. Sodium-activated K(+) channel. Acts as an important mediator of neuronal membrane excitability. Contributes to the delayed outward currents. Regulates neuronal bursting in sensory neurons. Contributes to synaptic development and plasticity. In Homo sapiens (Human), this protein is Potassium channel subfamily T member 1.